A 641-amino-acid polypeptide reads, in one-letter code: Chaperone protein DnaK (641 aa).

Thr200 bears the Phosphothreonine; by autocatalysis mark. A compositionally biased stretch (low complexity) spans 606 to 623; that stretch reads AEQGGNADAASGNAQASK. Residues 606–628 are disordered; it reads AEQGGNADAASGNAQASKAADDV.

The protein belongs to the heat shock protein 70 family.

In terms of biological role, acts as a chaperone. In Xanthomonas axonopodis pv. citri (strain 306), this protein is Chaperone protein DnaK.